The following is a 448-amino-acid chain: Phosphoglucosamine mutase (448 aa).

The Phosphoserine intermediate role is filled by Ser102. Ser102, Asp243, Asp245, and Asp247 together coordinate Mg(2+). Position 102 is a phosphoserine (Ser102).

The protein belongs to the phosphohexose mutase family. Mg(2+) is required as a cofactor. In terms of processing, activated by phosphorylation.

It catalyses the reaction alpha-D-glucosamine 1-phosphate = D-glucosamine 6-phosphate. Functionally, catalyzes the conversion of glucosamine-6-phosphate to glucosamine-1-phosphate. The chain is Phosphoglucosamine mutase from Mycobacterium bovis (strain ATCC BAA-935 / AF2122/97).